Here is a 192-residue protein sequence, read N- to C-terminus: Ion-translocating oxidoreductase complex subunit B (192 aa).

The hydrophobic stretch occupies residues 1–26; sequence MNAIWIAVAAVSLLGLAFGAILGYAS. Positions 32–91 constitute a 4Fe-4S domain; it reads EDDPVVEKIDEILPQSQCGQCGYPGCRPYAETISCNGEKINRCAPGGEAVMLKIAELLNV. [4Fe-4S] cluster contacts are provided by Cys49, Cys52, Cys57, Cys74, Cys117, Cys120, Cys123, Cys127, Cys147, Cys150, Cys153, and Cys157. 4Fe-4S ferredoxin-type domains follow at residues 108-137 and 138-167; these read MVAVIDENNCIGCTKCIQACPVDAIVGATR and AMHTVMSDLCTGCNLCVDPCPTHCISLQPV.

Belongs to the 4Fe4S bacterial-type ferredoxin family. RnfB subfamily. As to quaternary structure, the complex is composed of six subunits: RsxA, RsxB, RsxC, RsxD, RsxE and RsxG. It depends on [4Fe-4S] cluster as a cofactor.

The protein resides in the cell inner membrane. Functionally, part of a membrane-bound complex that couples electron transfer with translocation of ions across the membrane. Required to maintain the reduced state of SoxR. The sequence is that of Ion-translocating oxidoreductase complex subunit B from Escherichia coli O6:K15:H31 (strain 536 / UPEC).